The following is a 265-amino-acid chain: NAD kinase (265 aa).

Asp45 acts as the Proton acceptor in catalysis. NAD(+) contacts are provided by residues 45-46 (DG), 122-123 (NE), Arg148, Asp150, 161-166 (TAYSKS), and Ala185.

Belongs to the NAD kinase family. It depends on a divalent metal cation as a cofactor.

The protein localises to the cytoplasm. It carries out the reaction NAD(+) + ATP = ADP + NADP(+) + H(+). In terms of biological role, involved in the regulation of the intracellular balance of NAD and NADP, and is a key enzyme in the biosynthesis of NADP. Catalyzes specifically the phosphorylation on 2'-hydroxyl of the adenosine moiety of NAD to yield NADP. This is NAD kinase from Lactobacillus delbrueckii subsp. bulgaricus (strain ATCC 11842 / DSM 20081 / BCRC 10696 / JCM 1002 / NBRC 13953 / NCIMB 11778 / NCTC 12712 / WDCM 00102 / Lb 14).